The following is a 329-amino-acid chain: ADP-L-glycero-D-manno-heptose-6-epimerase (329 aa).

NADP(+) contacts are provided by residues 10 to 11 (FI), 31 to 32 (DD), lysine 38, lysine 53, 74 to 78 (QGACS), and asparagine 91. Catalysis depends on tyrosine 138, which acts as the Proton acceptor. Lysine 142 contacts NADP(+). A substrate-binding site is contributed by asparagine 167. NADP(+) is bound by residues valine 168 and lysine 176. Residue lysine 176 is the Proton acceptor of the active site. Substrate-binding positions include arginine 178, histidine 185, 199 to 202 (FAGW), arginine 212, and tyrosine 291.

Belongs to the NAD(P)-dependent epimerase/dehydratase family. HldD subfamily. In terms of assembly, homopentamer. It depends on NADP(+) as a cofactor.

It catalyses the reaction ADP-D-glycero-beta-D-manno-heptose = ADP-L-glycero-beta-D-manno-heptose. Its pathway is nucleotide-sugar biosynthesis; ADP-L-glycero-beta-D-manno-heptose biosynthesis; ADP-L-glycero-beta-D-manno-heptose from D-glycero-beta-D-manno-heptose 7-phosphate: step 4/4. It participates in bacterial outer membrane biogenesis; LPS core biosynthesis. Its function is as follows. Catalyzes the interconversion between ADP-D-glycero-beta-D-manno-heptose and ADP-L-glycero-beta-D-manno-heptose via an epimerization at carbon 6 of the heptose. This is ADP-L-glycero-D-manno-heptose-6-epimerase from Bordetella pertussis (strain Tohama I / ATCC BAA-589 / NCTC 13251).